Here is a 204-residue protein sequence, read N- to C-terminus: Thioredoxin-like 4, chloroplastic (204 aa).

Residues 1-27 (MSSLLNISHCSYHGYSGLTSRGGINTV) constitute a chloroplast transit peptide. The Thioredoxin domain maps to 63–201 (AKSLSQENLV…IDAAILKYTS (139 aa)). Residues Cys-119 and Cys-122 each act as nucleophile in the active site. The cysteines at positions 119 and 122 are disulfide-linked.

This sequence belongs to the thioredoxin family.

The protein resides in the plastid. The protein localises to the chloroplast. Functionally, probable thiol-disulfide oxidoreductase that may participate in various redox reactions. This chain is Thioredoxin-like 4, chloroplastic, found in Arabidopsis thaliana (Mouse-ear cress).